A 1086-amino-acid chain; its full sequence is Isoleucine--tRNA ligase (1086 aa).

The short motif at Pro-53–His-63 is the 'HIGH' region element. Positions Lys-624 to Arg-628 match the 'KMSKS' region motif. Lys-627 lines the ATP pocket.

Belongs to the class-I aminoacyl-tRNA synthetase family. IleS type 2 subfamily. In terms of assembly, monomer. The cofactor is Zn(2+).

The protein localises to the cytoplasm. The catalysed reaction is tRNA(Ile) + L-isoleucine + ATP = L-isoleucyl-tRNA(Ile) + AMP + diphosphate. Functionally, catalyzes the attachment of isoleucine to tRNA(Ile). As IleRS can inadvertently accommodate and process structurally similar amino acids such as valine, to avoid such errors it has two additional distinct tRNA(Ile)-dependent editing activities. One activity is designated as 'pretransfer' editing and involves the hydrolysis of activated Val-AMP. The other activity is designated 'posttransfer' editing and involves deacylation of mischarged Val-tRNA(Ile). This chain is Isoleucine--tRNA ligase, found in Rickettsia prowazekii (strain Madrid E).